Here is a 338-residue protein sequence, read N- to C-terminus: tRNA N6-adenosine threonylcarbamoyltransferase (338 aa).

Positions 111 and 115 each coordinate Fe cation. Residues 134–138, Asp167, Gly180, and Asn272 contribute to the substrate site; that span reads LVSGG. Asp300 is a Fe cation binding site.

The protein belongs to the KAE1 / TsaD family. It depends on Fe(2+) as a cofactor.

It localises to the cytoplasm. The enzyme catalyses L-threonylcarbamoyladenylate + adenosine(37) in tRNA = N(6)-L-threonylcarbamoyladenosine(37) in tRNA + AMP + H(+). In terms of biological role, required for the formation of a threonylcarbamoyl group on adenosine at position 37 (t(6)A37) in tRNAs that read codons beginning with adenine. Is involved in the transfer of the threonylcarbamoyl moiety of threonylcarbamoyl-AMP (TC-AMP) to the N6 group of A37, together with TsaE and TsaB. TsaD likely plays a direct catalytic role in this reaction. The polypeptide is tRNA N6-adenosine threonylcarbamoyltransferase (Aliivibrio salmonicida (strain LFI1238) (Vibrio salmonicida (strain LFI1238))).